We begin with the raw amino-acid sequence, 1029 residues long: Cilia- and flagella-associated protein 91 (1029 aa).

Disordered regions lie at residues 72-97 (NYRP…GPNR) and 117-170 (PPSQ…PWEP). Residues 272–299 (LELLDNALQVREEELDDENRLRVEARKE) adopt a coiled-coil conformation. Residues 837–854 (ENQDQQEPQPQPQPSSSS) are compositionally biased toward low complexity. Disordered regions lie at residues 837 to 861 (ENQD…DLAD) and 876 to 1029 (GEPS…EAAE). The span at 890 to 910 (QQLEADAEAEAEAEAEAEAGA) shows a compositional bias: acidic residues. A compositionally biased stretch (low complexity) spans 911 to 921 (EAEASAQAGAE). Over residues 922–932 (AEAEAGVEAEA) the composition is skewed to acidic residues. Low complexity predominate over residues 933–944 (EASAGAEASVGA). Positions 964–982 (PEAEAEAEAGAEAEAENGA) are enriched in acidic residues. The span at 984 to 999 (AEARLGGEEEGFREGE) shows a compositional bias: basic and acidic residues. Over residues 1000 to 1015 (GQGGAAAGEAGPGGEL) the composition is skewed to gly residues. The span at 1016-1029 (AEGEGEAGEGEAAE) shows a compositional bias: acidic residues.

The protein belongs to the CFAP91 family. In terms of assembly, identified in a spoke-associated complex containing CFAP61, CFAP91 and CFAP251; the complex is associated with the radial spokes of the axoneme. The complex associates with Calmodulin; the association is calcium sensitive. Interacts with RSP3.

The protein resides in the cytoplasm. The protein localises to the cytoskeleton. It localises to the flagellum axoneme. Functionally, as component of a spoke-associated complex, regulates flagellar dynein activity by mediating regulatory signals between the radial spokes and dynein arms. The chain is Cilia- and flagella-associated protein 91 from Chlamydomonas reinhardtii (Chlamydomonas smithii).